Consider the following 181-residue polypeptide: 6,7-dimethyl-8-ribityllumazine synthase (181 aa).

Residues Tyr30, Ala61–Glu63, and Cys87–Ile89 contribute to the 5-amino-6-(D-ribitylamino)uracil site. Glu92–Thr93 serves as a coordination point for (2S)-2-hydroxy-3-oxobutyl phosphate. His95 (proton donor) is an active-site residue. Asn120 is a 5-amino-6-(D-ribitylamino)uracil binding site. Arg134 lines the (2S)-2-hydroxy-3-oxobutyl phosphate pocket.

The protein belongs to the DMRL synthase family.

The enzyme catalyses (2S)-2-hydroxy-3-oxobutyl phosphate + 5-amino-6-(D-ribitylamino)uracil = 6,7-dimethyl-8-(1-D-ribityl)lumazine + phosphate + 2 H2O + H(+). It participates in cofactor biosynthesis; riboflavin biosynthesis; riboflavin from 2-hydroxy-3-oxobutyl phosphate and 5-amino-6-(D-ribitylamino)uracil: step 1/2. In terms of biological role, catalyzes the formation of 6,7-dimethyl-8-ribityllumazine by condensation of 5-amino-6-(D-ribitylamino)uracil with 3,4-dihydroxy-2-butanone 4-phosphate. This is the penultimate step in the biosynthesis of riboflavin. The protein is 6,7-dimethyl-8-ribityllumazine synthase of Beijerinckia indica subsp. indica (strain ATCC 9039 / DSM 1715 / NCIMB 8712).